A 586-amino-acid chain; its full sequence is Alanine racemase ungC (586 aa).

Residues 187–206 (RVGALPAAASTASPMGSSLP) form a disordered region. A compositionally biased stretch (polar residues) spans 196–206 (STASPMGSSLP).

This sequence belongs to the trans-sulfuration enzymes family. Pyridoxal 5'-phosphate is required as a cofactor.

The catalysed reaction is L-alanine = D-alanine. Its pathway is secondary metabolite biosynthesis. In terms of biological role, alanine racemase; part of the gene cluster that mediates the biosynthesis of the unguisins, gamma-aminobutyric acid (GABA)-containing fungal cyclic heptapeptides with the amino acid sequence cyclo-(D-Ala1-D-Val2-L-Phe3-D-Val4-D-Ala5-D-Trp6-GABA7) for unguisin A and cyclo-(D-Ala1-D-Val2-L-Leu3-D-Val4-D-Ala5-D-Trp6-GABA7) for unguisin B. Within the pathway, the alanine racemase ungC catalyzes the interconversion of L-alanine and D-alanine, providing the D-alanine which is accepted by the first adenylation domain of the nonribosomal peptide synthetase (NRPS) ungA. UngA is the main enzyme within the cluster which condenses the 7 residues using its respective 7 modules. The terminal condensation domain (Ct) is involved in cyclization with D-alanine and thereby releasing of unguisins A and B. Finally, the hydrolase ungD catalyzes the hydrolysis between the D-tryptophan and GABA residues of unguisins A and B to produce the corresponding linear peptides. The polypeptide is Alanine racemase ungC (Aspergillus violaceofuscus (strain CBS 115571)).